A 318-amino-acid chain; its full sequence is tRNA-dihydrouridine(16) synthase (318 aa).

FMN-binding positions include proline 7–glutamate 9 and glutamine 68. Cysteine 98 (proton donor) is an active-site residue. Residues lysine 139, asparagine 200–glutamate 202, and cysteine 224–arginine 225 contribute to the FMN site.

Belongs to the Dus family. DusC subfamily. FMN serves as cofactor.

The catalysed reaction is 5,6-dihydrouridine(16) in tRNA + NADP(+) = uridine(16) in tRNA + NADPH + H(+). It carries out the reaction 5,6-dihydrouridine(16) in tRNA + NAD(+) = uridine(16) in tRNA + NADH + H(+). Its function is as follows. Catalyzes the synthesis of 5,6-dihydrouridine (D), a modified base found in the D-loop of most tRNAs, via the reduction of the C5-C6 double bond in target uridines. Specifically modifies U16 in tRNAs. The polypeptide is tRNA-dihydrouridine(16) synthase (Vibrio vulnificus (strain CMCP6)).